We begin with the raw amino-acid sequence, 288 residues long: MTVDGQVGRWPVSAIPAAYMRPGSGSFTEFLAGAEPHLLPGRAGAQPAGAAPAVPHGTTIVALTCEQGVVVAGDRRATMGNIIAQRDIEKVFVADSHSAIGIAGTAGLAVEMVRLFRLELEHYEKIEGVRLSLDGKANRLATMIRGNLGMAMQGLAVVPLFAGVEEDPEVDPVKRGPGGGRIFSYDVAGGKYEEHDYYAVGSGSTFARSALKKRYNAAADLPGAVRTAVEALYDAADDDSATGGPDLTRRIFPVVVAITAQGAVRWSDDEVGVVAEAVVAGRMVNPGG.

A propeptide spans 1 to 57 (MTVDGQVGRWPVSAIPAAYMRPGSGSFTEFLAGAEPHLLPGRAGAQPAGAAPAVPHG) (removed in mature form; by autocatalysis). Thr58 (nucleophile) is an active-site residue.

Belongs to the peptidase T1B family. As to quaternary structure, the 20S proteasome core is composed of 14 alpha and 14 beta subunits that assemble into four stacked heptameric rings, resulting in a barrel-shaped structure. The two inner rings, each composed of seven catalytic beta subunits, are sandwiched by two outer rings, each composed of seven alpha subunits. The catalytic chamber with the active sites is on the inside of the barrel. Has a gated structure, the ends of the cylinder being occluded by the N-termini of the alpha-subunits. Is capped by the proteasome-associated ATPase, ARC.

Its subcellular location is the cytoplasm. It catalyses the reaction Cleavage of peptide bonds with very broad specificity.. The protein operates within protein degradation; proteasomal Pup-dependent pathway. The formation of the proteasomal ATPase ARC-20S proteasome complex, likely via the docking of the C-termini of ARC into the intersubunit pockets in the alpha-rings, may trigger opening of the gate for substrate entry. Interconversion between the open-gate and close-gate conformations leads to a dynamic regulation of the 20S proteasome proteolysis activity. In terms of biological role, component of the proteasome core, a large protease complex with broad specificity involved in protein degradation. In Nakamurella multipartita (strain ATCC 700099 / DSM 44233 / CIP 104796 / JCM 9543 / NBRC 105858 / Y-104) (Microsphaera multipartita), this protein is Proteasome subunit beta.